Consider the following 360-residue polypeptide: MTATLQQRKSANVWEQFCEWITSTNNRLYIGWFGVLMIPTLLAATTCFIIAFIAAPPVDIDGIREPVAGSLIYGNNIISGAVVPSSNAIGLHFYPIWEAASLDEWLYNGGPYQLVIFHFLTGVFCYLGREWELSYRLGMRPWICLAFSAPVAAATAVFLIYPIGQGSFSDGMPLGISGTFNFMIVFQAEHNILMHPFHMLGVAGVFGGSLFSAMHGSLVTSSLVRETTENESQNYGYKFGQEEETYNIVAAHGYFGRLIFQYASFNNSRQLHFFLAAWPVIGIWFTALGVSTMAFNLNGFNFNQSIIDSQGRVINTWADIINRANLGMEVMHERNAHNFPLDLAAGEVAPVAISAPAING.

3 helical membrane passes run 29–46, 118–133, and 142–156; these read YIGW…AATT, HFLT…EWEL, and WICL…AATA. Chlorophyll a is bound at residue His-118. Position 126 (Tyr-126) interacts with pheophytin a. [CaMn4O5] cluster-binding residues include Asp-170 and Glu-189. A helical membrane pass occupies residues 197 to 218; the sequence is FHMLGVAGVFGGSLFSAMHGSL. His-198 is a binding site for chlorophyll a. Residues His-215 and 264–265 contribute to the a quinone site; that span reads SF. Residue His-215 coordinates Fe cation. His-272 serves as a coordination point for Fe cation. Residues 274–288 form a helical membrane-spanning segment; it reads FLAAWPVIGIWFTAL. [CaMn4O5] cluster contacts are provided by His-332, Glu-333, Asp-342, and Ala-344. Residues 345 to 360 constitute a propeptide that is removed on maturation; the sequence is AGEVAPVAISAPAING.

Belongs to the reaction center PufL/M/PsbA/D family. As to quaternary structure, PSII is composed of 1 copy each of membrane proteins PsbA, PsbB, PsbC, PsbD, PsbE, PsbF, PsbH, PsbI, PsbJ, PsbK, PsbL, PsbM, PsbT, PsbX, PsbY, PsbZ, Psb30/Ycf12, peripheral proteins PsbO, CyanoQ (PsbQ), PsbU, PsbV and a large number of cofactors. It forms dimeric complexes. The D1/D2 heterodimer binds P680, chlorophylls that are the primary electron donor of PSII, and subsequent electron acceptors. It shares a non-heme iron and each subunit binds pheophytin, quinone, additional chlorophylls, carotenoids and lipids. D1 provides most of the ligands for the Mn4-Ca-O5 cluster of the oxygen-evolving complex (OEC). There is also a Cl(-1) ion associated with D1 and D2, which is required for oxygen evolution. The PSII complex binds additional chlorophylls, carotenoids and specific lipids. serves as cofactor. Post-translationally, tyr-161 forms a radical intermediate that is referred to as redox-active TyrZ, YZ or Y-Z. C-terminally processed by CtpA; processing is essential to allow assembly of the oxygen-evolving complex and thus photosynthetic growth.

It localises to the cellular thylakoid membrane. The catalysed reaction is 2 a plastoquinone + 4 hnu + 2 H2O = 2 a plastoquinol + O2. Its function is as follows. Photosystem II (PSII) is a light-driven water:plastoquinone oxidoreductase that uses light energy to abstract electrons from H(2)O, generating O(2) and a proton gradient subsequently used for ATP formation. It consists of a core antenna complex that captures photons, and an electron transfer chain that converts photonic excitation into a charge separation. The D1/D2 (PsbA/PsbD) reaction center heterodimer binds P680, the primary electron donor of PSII as well as several subsequent electron acceptors. In Nostoc sp. (strain PCC 7120 / SAG 25.82 / UTEX 2576), this protein is Photosystem II protein D1 2.